The sequence spans 154 residues: Protein MoxZ (154 aa).

The polypeptide is Protein MoxZ (moxZ) (Paracoccus denitrificans).